We begin with the raw amino-acid sequence, 347 residues long: Protein-glutamate methylesterase/protein-glutamine glutaminase 3 (347 aa).

The 118-residue stretch at 3-120 (QVFIVDDSAV…KNFLEESEIL (118 aa)) folds into the Response regulatory domain. Aspartate 54 carries the post-translational modification 4-aspartylphosphate. The 189-residue stretch at 159 to 347 (IDTTDKLIAI…SKIVGEVQYF (189 aa)) folds into the CheB-type methylesterase domain. Residues serine 171, histidine 197, and aspartate 293 contribute to the active site.

This sequence belongs to the CheB family. Phosphorylated by CheA. Phosphorylation of the N-terminal regulatory domain activates the methylesterase activity.

The protein resides in the cytoplasm. The enzyme catalyses [protein]-L-glutamate 5-O-methyl ester + H2O = L-glutamyl-[protein] + methanol + H(+). The catalysed reaction is L-glutaminyl-[protein] + H2O = L-glutamyl-[protein] + NH4(+). Functionally, involved in chemotaxis. Part of a chemotaxis signal transduction system that modulates chemotaxis in response to various stimuli. Catalyzes the demethylation of specific methylglutamate residues introduced into the chemoreceptors (methyl-accepting chemotaxis proteins or MCP) by CheR. Also mediates the irreversible deamidation of specific glutamine residues to glutamic acid. This is Protein-glutamate methylesterase/protein-glutamine glutaminase 3 from Leptospira interrogans serogroup Icterohaemorrhagiae serovar copenhageni (strain Fiocruz L1-130).